The chain runs to 87 residues: Mitochondrial import inner membrane translocase subunit TIM9 (87 aa).

A Twin CX3C motif motif is present at residues 35–59; that stretch reads CFSDCVNDFTSSKLTSKEQTCIMRC. 2 disulfides stabilise this stretch: cysteine 35-cysteine 59 and cysteine 39-cysteine 55.

Belongs to the small Tim family. In terms of assembly, heterohexamer; composed of 3 copies of TIM9 and 3 copies of TIM10, named soluble 70 kDa complex. Associates with the TIM22 complex, whose core is composed of TIM22 and TIM54. Interacts with the transmembrane regions of multi-pass transmembrane proteins in transit.

It localises to the mitochondrion inner membrane. Its function is as follows. Mitochondrial intermembrane chaperone that participates in the import and insertion of multi-pass transmembrane proteins into the mitochondrial inner membrane. Also required for the transfer of beta-barrel precursors from the TOM complex to the sorting and assembly machinery (SAM complex) of the outer membrane. Acts as a chaperone-like protein that protects the hydrophobic precursors from aggregation and guide them through the mitochondrial intermembrane space. This chain is Mitochondrial import inner membrane translocase subunit TIM9 (TIM9), found in Eremothecium gossypii (strain ATCC 10895 / CBS 109.51 / FGSC 9923 / NRRL Y-1056) (Yeast).